The sequence spans 118 residues: Non-specific lipid-transfer protein 1 (118 aa).

An N-terminal signal peptide occupies residues 1–20 (MARLAVAIAVVAAVVVVLAA). Cystine bridges form between cysteine 29-cysteine 77, cysteine 39-cysteine 54, cysteine 55-cysteine 100, and cysteine 75-cysteine 114.

Belongs to the plant LTP family.

Functionally, plant non-specific lipid-transfer proteins transfer phospholipids as well as galactolipids across membranes. May play a role in wax or cutin deposition in the cell walls of expanding epidermal cells and certain secretory tissues. The polypeptide is Non-specific lipid-transfer protein 1 (LTP1) (Sorghum bicolor (Sorghum)).